Consider the following 427-residue polypeptide: MNARAEGCTAAPDPSSRVVRHERGQHEVFCGLTGIVWLHRKIQDAFFLVVGSRTCAHLIQSAAGVMIFAEPRFGTAIMEEKDLAGLTDANDELDRIVTQLIARRPDIKLLFLVGSCPSEVIKLDLSRAALRLSQRFSPAVRVLSYSGSGLETTFTQGEDACLASLVPVLPASTGTEASLLVVGSLADVVEDQFIRLFDGLGIGSVQFFPPRNSGSMPSVGPNTKFLLAQPFLPDTARELEHRGAKRLAAPFPLGVEGTTGWLRAAANAFGVDEALFDKVTQPARVRAERALDKFRKELSGRRLFFFPDSQLEIPLARFLSRELSMELVEVGTPYLHREHLAEELKLLPADAAITEGQDVDLQLDRCREARPDIVVCGLGLANPLEAEGMTTKWAIELVFTPIQGYDQASDLAELFARPLVRRAKLVA.

Positions 30, 55, and 116 each coordinate [4Fe-4S] cluster.

Belongs to the BchN/ChlN family. Protochlorophyllide reductase is composed of three subunits; BchL, BchN and BchB. Forms a heterotetramer of two BchB and two BchN subunits. [4Fe-4S] cluster is required as a cofactor.

It catalyses the reaction chlorophyllide a + oxidized 2[4Fe-4S]-[ferredoxin] + 2 ADP + 2 phosphate = protochlorophyllide a + reduced 2[4Fe-4S]-[ferredoxin] + 2 ATP + 2 H2O. The protein operates within porphyrin-containing compound metabolism; bacteriochlorophyll biosynthesis (light-independent). In terms of biological role, component of the dark-operative protochlorophyllide reductase (DPOR) that uses Mg-ATP and reduced ferredoxin to reduce ring D of protochlorophyllide (Pchlide) to form chlorophyllide a (Chlide). This reaction is light-independent. The NB-protein (BchN-BchB) is the catalytic component of the complex. The polypeptide is Light-independent protochlorophyllide reductase subunit N (Rhodopseudomonas palustris (strain BisA53)).